The sequence spans 476 residues: Bifunctional protein GlmU (476 aa).

The segment at 1-235 (MTALDIIIMA…ALQVAGVNSP (235 aa)) is pyrophosphorylase. UDP-N-acetyl-alpha-D-glucosamine-binding positions include lysine 23, glutamine 81, 86 to 87 (GT), 108 to 110 (SGD), glycine 145, glutamate 160, and asparagine 233. Residue aspartate 110 participates in Mg(2+) binding. Asparagine 233 is a binding site for Mg(2+). Residues 236-256 (AQLADLERAHQRAQAAALMEQ) are linker. The interval 257–476 (GVRLADPARF…WKRPAKQAKG (220 aa)) is N-acetyltransferase. UDP-N-acetyl-alpha-D-glucosamine is bound by residues arginine 351 and lysine 369. The active-site Proton acceptor is the histidine 381. The UDP-N-acetyl-alpha-D-glucosamine site is built by tyrosine 384 and asparagine 395. Acetyl-CoA-binding positions include alanine 398, 404–405 (NY), serine 423, glycine 441, and arginine 458.

This sequence in the N-terminal section; belongs to the N-acetylglucosamine-1-phosphate uridyltransferase family. It in the C-terminal section; belongs to the transferase hexapeptide repeat family. Homotrimer. Mg(2+) is required as a cofactor.

Its subcellular location is the cytoplasm. It catalyses the reaction alpha-D-glucosamine 1-phosphate + acetyl-CoA = N-acetyl-alpha-D-glucosamine 1-phosphate + CoA + H(+). It carries out the reaction N-acetyl-alpha-D-glucosamine 1-phosphate + UTP + H(+) = UDP-N-acetyl-alpha-D-glucosamine + diphosphate. Its pathway is nucleotide-sugar biosynthesis; UDP-N-acetyl-alpha-D-glucosamine biosynthesis; N-acetyl-alpha-D-glucosamine 1-phosphate from alpha-D-glucosamine 6-phosphate (route II): step 2/2. The protein operates within nucleotide-sugar biosynthesis; UDP-N-acetyl-alpha-D-glucosamine biosynthesis; UDP-N-acetyl-alpha-D-glucosamine from N-acetyl-alpha-D-glucosamine 1-phosphate: step 1/1. It participates in bacterial outer membrane biogenesis; LPS lipid A biosynthesis. In terms of biological role, catalyzes the last two sequential reactions in the de novo biosynthetic pathway for UDP-N-acetylglucosamine (UDP-GlcNAc). The C-terminal domain catalyzes the transfer of acetyl group from acetyl coenzyme A to glucosamine-1-phosphate (GlcN-1-P) to produce N-acetylglucosamine-1-phosphate (GlcNAc-1-P), which is converted into UDP-GlcNAc by the transfer of uridine 5-monophosphate (from uridine 5-triphosphate), a reaction catalyzed by the N-terminal domain. This chain is Bifunctional protein GlmU, found in Acidovorax sp. (strain JS42).